Reading from the N-terminus, the 122-residue chain is Large ribosomal subunit protein uL14 (122 aa).

The protein belongs to the universal ribosomal protein uL14 family. Part of the 50S ribosomal subunit. Forms a cluster with proteins L3 and L19. In the 70S ribosome, L14 and L19 interact and together make contacts with the 16S rRNA in bridges B5 and B8.

Functionally, binds to 23S rRNA. Forms part of two intersubunit bridges in the 70S ribosome. In Mycoplasma capricolum subsp. capricolum (strain California kid / ATCC 27343 / NCTC 10154), this protein is Large ribosomal subunit protein uL14.